A 1001-amino-acid chain; its full sequence is Ankyrin repeat domain-containing protein 35 (1001 aa).

ANK repeat units lie at residues 53–82, 86–115, 119–148, 152–181, 185–214, and 218–247; these read NGQS…DINS, DGST…NEDA, ENRS…FLDV, DGRT…RVNV, NDKS…DAGA, and TGHD…RRRR. Disordered regions lie at residues 256 to 296, 352 to 482, and 559 to 601; these read PDLA…PCSE, PRAS…VAEP, and PEVP…ALGG. Residues 281-295 show a composition bias toward acidic residues; sequence PEEEQEEKEDEDPCS. The stretch at 295–344 forms a coiled coil; it reads SEEWRWKYEEERRKVVRLEQELVQKTEECKTQAAAYLDLENQIREQAQEL. Residues 402–422 show a composition bias toward basic and acidic residues; the sequence is KKAEDSAPGKIQYEVHGRSQP. A compositionally biased stretch (low complexity) spans 423-434; sequence EEQGPPQSPASE. Residues 440–450 are compositionally biased toward polar residues; that stretch reads TGQQLTTNGAQ. The span at 579–588 shows a compositional bias: basic and acidic residues; it reads KQDEEKEKRV. 3 coiled-coil regions span residues 610 to 696, 733 to 810, and 851 to 968; these read KGQL…LLAS, ISTL…IGKL, and QELK…HEEI. Residues 879 to 902 form a disordered region; sequence RRSGDLAAQAAEQERQASEMRGRS. A compositionally biased stretch (basic and acidic residues) spans 890-902; that stretch reads EQERQASEMRGRS.

The sequence is that of Ankyrin repeat domain-containing protein 35 (ANKRD35) from Homo sapiens (Human).